The chain runs to 448 residues: Chromosomal replication initiator protein DnaA 1 (448 aa).

The interval 1–76 is domain I, interacts with DnaA modulators; it reads MLTSETQNVW…FLPVDMSGEP (76 aa). The domain II stretch occupies residues 76 to 111; the sequence is PAIRFIIAPPQKKIIPPNHFSISSSQKEEQSPNSDV. A domain III, AAA+ region region spans residues 112 to 328; sequence KLNNNYRFEN…GAINRLSAHC (217 aa). The ATP site is built by Gly156, Gly158, Lys159, and Thr160. Residues 329 to 448 are domain IV, binds dsDNA; the sequence is RLLDLNITEE…IGMVRRNIES (120 aa).

The protein belongs to the DnaA family. As to quaternary structure, oligomerizes as a right-handed, spiral filament on DNA at oriC.

It localises to the cytoplasm. Plays an essential role in the initiation and regulation of chromosomal replication. ATP-DnaA binds to the origin of replication (oriC) to initiate formation of the DNA replication initiation complex once per cell cycle. Binds the DnaA box (a 9 base pair repeat at the origin) and separates the double-stranded (ds)DNA. Forms a right-handed helical filament on oriC DNA; dsDNA binds to the exterior of the filament while single-stranded (ss)DNA is stabiized in the filament's interior. The ATP-DnaA-oriC complex binds and stabilizes one strand of the AT-rich DNA unwinding element (DUE), permitting loading of DNA polymerase. After initiation quickly degrades to an ADP-DnaA complex that is not apt for DNA replication. Binds acidic phospholipids. The protein is Chromosomal replication initiator protein DnaA 1 of Protochlamydia amoebophila (strain UWE25).